Here is a 389-residue protein sequence, read N- to C-terminus: G2/M cell-cycle inhibitor DR6 (389 aa).

This sequence belongs to the Roseolovirus DR6 family.

The protein localises to the host nucleus. Its function is as follows. Inhibits the host G2/M cell-cycle progression in a p53-independent manner. The sequence is that of G2/M cell-cycle inhibitor DR6 (DR6L) from Homo sapiens (Human).